Here is a 469-residue protein sequence, read N- to C-terminus: Glutamine synthetase (469 aa).

The 82-residue stretch at 15-96 folds into the GS beta-grasp domain; the sequence is EDVKFVDVRF…INFFIHDPIT (82 aa). The region spanning 104-469 is the GS catalytic domain; that stretch reads PRNVAKKAEA…PHEFEMYFDV (366 aa). Glutamate 129 and glutamate 131 together coordinate Mg(2+). Position 205 (glutamate 205) interacts with ATP. Mg(2+) is bound by residues glutamate 210 and glutamate 218. 221 to 223 lines the ATP pocket; sequence YKF. Residues 262-263 and glycine 263 each bind L-glutamate; that span reads NG. Residue histidine 267 coordinates Mg(2+). Residues 269 to 271 and serine 271 each bind ATP; that span reads HQS. Arginine 320, glutamate 326, and arginine 338 together coordinate L-glutamate. The ATP site is built by arginine 338, arginine 343, and lysine 352. Glutamate 357 contributes to the Mg(2+) binding site. L-glutamate is bound at residue arginine 359. Tyrosine 397 is subject to O-AMP-tyrosine.

This sequence belongs to the glutamine synthetase family. In terms of assembly, oligomer of 12 subunits arranged in the form of two hexagons. Requires Mg(2+) as cofactor.

It is found in the cytoplasm. It catalyses the reaction L-glutamate + NH4(+) + ATP = L-glutamine + ADP + phosphate + H(+). Its activity is regulated as follows. The activity of this enzyme could be controlled by adenylation under conditions of abundant glutamine. Its function is as follows. Catalyzes the ATP-dependent biosynthesis of glutamine from glutamate and ammonia. Complements L-glutamine auxotrophy of an E.coli glnA mutant. In Streptomyces coelicolor (strain ATCC BAA-471 / A3(2) / M145), this protein is Glutamine synthetase.